Reading from the N-terminus, the 205-residue chain is Small ribosomal subunit protein uS4 (205 aa).

The S4 RNA-binding domain occupies 94–157 (SRLDTVVYRM…KQIPLIQESV (64 aa)).

This sequence belongs to the universal ribosomal protein uS4 family. As to quaternary structure, part of the 30S ribosomal subunit. Contacts protein S5. The interaction surface between S4 and S5 is involved in control of translational fidelity.

One of the primary rRNA binding proteins, it binds directly to 16S rRNA where it nucleates assembly of the body of the 30S subunit. In terms of biological role, with S5 and S12 plays an important role in translational accuracy. The protein is Small ribosomal subunit protein uS4 of Rickettsia conorii (strain ATCC VR-613 / Malish 7).